Here is a 475-residue protein sequence, read N- to C-terminus: Chemotaxis protein MotD (475 aa).

Disordered regions lie at residues 1-175 (MRPL…PVGG), 195-243 (LQPE…SEPD), and 408-475 (GDSA…HVYM). Over residues 9 to 22 (RTSAASRPAQSLSV) the composition is skewed to polar residues. Low complexity predominate over residues 79–100 (ADVPASMADAASPDARPASERA). Basic and acidic residues predominate over residues 143–155 (HSRETVHALRDAI). Positions 408–417 (GDSASGGGGQ) are enriched in gly residues. The span at 427 to 449 (EGRERAGDDGQGRQPRDGGRAAT) shows a compositional bias: basic and acidic residues.

The protein localises to the cytoplasm. Required for the rotation of the flagellar motor. Has a positive effect as flagellar rotation increases when an excess of motd is present. The polypeptide is Chemotaxis protein MotD (motD) (Rhizobium meliloti (Ensifer meliloti)).